Reading from the N-terminus, the 668-residue chain is DNA mismatch repair protein MutL (668 aa).

Residues 437–459 form a disordered region; that stretch reads TYQSQYSETGSHSQETLPLSEQK. Residues 438 to 459 are compositionally biased toward polar residues; it reads YQSQYSETGSHSQETLPLSEQK.

It belongs to the DNA mismatch repair MutL/HexB family.

In terms of biological role, this protein is involved in the repair of mismatches in DNA. It is required for dam-dependent methyl-directed DNA mismatch repair. May act as a 'molecular matchmaker', a protein that promotes the formation of a stable complex between two or more DNA-binding proteins in an ATP-dependent manner without itself being part of a final effector complex. The chain is DNA mismatch repair protein MutL from Leuconostoc citreum (strain KM20).